Reading from the N-terminus, the 128-residue chain is Ribonuclease P protein component (128 aa).

Belongs to the RnpA family. Consists of a catalytic RNA component (M1 or rnpB) and a protein subunit.

It catalyses the reaction Endonucleolytic cleavage of RNA, removing 5'-extranucleotides from tRNA precursor.. Functionally, RNaseP catalyzes the removal of the 5'-leader sequence from pre-tRNA to produce the mature 5'-terminus. It can also cleave other RNA substrates such as 4.5S RNA. The protein component plays an auxiliary but essential role in vivo by binding to the 5'-leader sequence and broadening the substrate specificity of the ribozyme. This chain is Ribonuclease P protein component, found in Prochlorococcus marinus (strain AS9601).